Here is a 341-residue protein sequence, read N- to C-terminus: S-adenosylmethionine:tRNA ribosyltransferase-isomerase (341 aa).

The protein belongs to the QueA family. Monomer.

It localises to the cytoplasm. The catalysed reaction is 7-aminomethyl-7-carbaguanosine(34) in tRNA + S-adenosyl-L-methionine = epoxyqueuosine(34) in tRNA + adenine + L-methionine + 2 H(+). It functions in the pathway tRNA modification; tRNA-queuosine biosynthesis. Its function is as follows. Transfers and isomerizes the ribose moiety from AdoMet to the 7-aminomethyl group of 7-deazaguanine (preQ1-tRNA) to give epoxyqueuosine (oQ-tRNA). The chain is S-adenosylmethionine:tRNA ribosyltransferase-isomerase from Clostridium botulinum (strain Okra / Type B1).